The following is a 546-amino-acid chain: Undecaprenyl phosphate-alpha-4-amino-4-deoxy-L-arabinose arabinosyl transferase (546 aa).

12 helical membrane-spanning segments follow: residues isoleucine 6–leucine 26, alanine 87–phenylalanine 107, alanine 113–serine 133, leucine 177–isoleucine 197, tryptophan 208–histidine 228, tyrosine 260–isoleucine 280, serine 289–alanine 309, leucine 313–isoleucine 333, isoleucine 345–phenylalanine 365, proline 380–alanine 400, tyrosine 410–isoleucine 430, and alanine 450–phenylalanine 467.

The protein belongs to the glycosyltransferase 83 family.

The protein localises to the cell inner membrane. It carries out the reaction 4-amino-4-deoxy-alpha-L-arabinopyranosyl di-trans,octa-cis-undecaprenyl phosphate + lipid IVA = lipid IIA + di-trans,octa-cis-undecaprenyl phosphate.. Its pathway is lipopolysaccharide metabolism; 4-amino-4-deoxy-beta-L-arabinose-lipid A biosynthesis. Catalyzes the transfer of the L-Ara4N moiety of the glycolipid undecaprenyl phosphate-alpha-L-Ara4N to lipid A. The modified arabinose is attached to lipid A and is required for resistance to polymyxin and cationic antimicrobial peptides. The sequence is that of Undecaprenyl phosphate-alpha-4-amino-4-deoxy-L-arabinose arabinosyl transferase from Shewanella sediminis (strain HAW-EB3).